The primary structure comprises 362 residues: MTQPAFFKRPLPSTLAEIAASTGAQLVDASRGGIRIIGLASLDQAGPMHLAFFDNHKYAGQLAATKAGACLVSPRFEADVPAHVAVLRSKAPFRAFVSIARDFHGDALRPQSWFDNTAVAASAVIHPSAYLEDEVVIDPLAVIGPDVQIGRGSVIGSGAVIGPGVRIGRDCNVGAGTTIQATLIGNNVLIHPGCHIGQDGYGFIFFGSEGHVKVPQTGRVLIQNDVEIGAGTTIDRGSLRDTVIGEGTKIDNQVQIGHNVTIGRRCLLAAQIGLAGSLTIGDNVALGAKVGINNHLHIGDGAQVTAMSGVKDDIPANGRWGGYFAKPTRQWFRELLAVERLVRDGAPDAGSPKAAPKDRVIE.

The active-site Proton acceptor is the His258.

The protein belongs to the transferase hexapeptide repeat family. LpxD subfamily. As to quaternary structure, homotrimer.

The enzyme catalyses a UDP-3-O-[(3R)-3-hydroxyacyl]-alpha-D-glucosamine + a (3R)-hydroxyacyl-[ACP] = a UDP-2-N,3-O-bis[(3R)-3-hydroxyacyl]-alpha-D-glucosamine + holo-[ACP] + H(+). Its pathway is bacterial outer membrane biogenesis; LPS lipid A biosynthesis. Its function is as follows. Catalyzes the N-acylation of UDP-3-O-acylglucosamine using 3-hydroxyacyl-ACP as the acyl donor. Is involved in the biosynthesis of lipid A, a phosphorylated glycolipid that anchors the lipopolysaccharide to the outer membrane of the cell. This Nitrobacter winogradskyi (strain ATCC 25391 / DSM 10237 / CIP 104748 / NCIMB 11846 / Nb-255) protein is UDP-3-O-acylglucosamine N-acyltransferase 1.